Reading from the N-terminus, the 410-residue chain is Cysteine desulfurase IscS (410 aa).

Pyridoxal 5'-phosphate-binding positions include 80-81 (AT), Asn160, Gln188, and 208-210 (SGH). Lys211 carries the post-translational modification N6-(pyridoxal phosphate)lysine. Position 248 (Thr248) interacts with pyridoxal 5'-phosphate. The active-site Cysteine persulfide intermediate is Cys334. [2Fe-2S] cluster is bound at residue Cys334.

This sequence belongs to the class-V pyridoxal-phosphate-dependent aminotransferase family. NifS/IscS subfamily. As to quaternary structure, homodimer. Forms a heterotetramer with IscU, interacts with other sulfur acceptors. It depends on pyridoxal 5'-phosphate as a cofactor.

The protein resides in the cytoplasm. It carries out the reaction (sulfur carrier)-H + L-cysteine = (sulfur carrier)-SH + L-alanine. It functions in the pathway cofactor biosynthesis; iron-sulfur cluster biosynthesis. Master enzyme that delivers sulfur to a number of partners involved in Fe-S cluster assembly, tRNA modification or cofactor biosynthesis. Catalyzes the removal of elemental sulfur atoms from cysteine to produce alanine. Functions as a sulfur delivery protein for Fe-S cluster synthesis onto IscU, an Fe-S scaffold assembly protein, as well as other S acceptor proteins. In Rickettsia akari (strain Hartford), this protein is Cysteine desulfurase IscS.